The chain runs to 585 residues: Auxin response factor 17 (585 aa).

The segment at residues 119-221 is a DNA-binding region (TF-B3); that stretch reads FAKILTPSDA…EMFIGVRRTP (103 aa). Disordered stretches follow at residues 483–517 and 535–585; these read EMMN…RGPL and EHSE…SSQG. Residues 488-510 are compositionally biased toward low complexity; that stretch reads GSPPSDNLSPNSNTTNLSSGNDL. Polar residues predominate over residues 573-585; sequence KHSNSNAGSSSQG.

The protein belongs to the ARF family. Homo and heterodimers.

The protein resides in the nucleus. Auxin response factors (ARFs) are transcriptional factors that bind specifically to the DNA sequence 5'-TGTCTC-3' found in the auxin-responsive promoter elements (AuxREs). Could act as transcriptional activator or repressor. Formation of heterodimers with Aux/IAA proteins may alter their ability to modulate early auxin response genes expression. The protein is Auxin response factor 17 (ARF17) of Arabidopsis thaliana (Mouse-ear cress).